Reading from the N-terminus, the 355-residue chain is MKLNVNLPRKPYDIIIEKGSLSKVGQWVKELWQPQKIALITDNRVGSLYAEKVKLGLEDAGFEIVVFDFLEGEASKNLTTVNKAYEFLLKQGMTRSDGIIALGGGVVGDLAGFVASTYMRGIHFLQIPTSLTAQVDSSIGGKTGVNTPLAKNMVGTFTQPDGVLIDPDTLNTLGKRELIEGMGEVIKYGLIADVELWEILKDLDGSTDSILENAEKIIYHSCNVKRQIVVEDELDNGVRLYLNFGHTIGHAIEATAGYGKVMHGEAVAIGMVQISRIAETKGLMLQGITEKIEAMCLKFGLPTDYSPWNVEPMYQALKHDKKTRGQMIKMVVVPQLGQAAINQISLEEMKEYLEK.

NAD(+) contacts are provided by residues 71-76, 105-109, 129-130, K142, K151, and 169-172; these read EGEASK, GVVGD, TS, and TLNT. Zn(2+)-binding residues include E184, H246, and H263.

It belongs to the sugar phosphate cyclases superfamily. Dehydroquinate synthase family. NAD(+) serves as cofactor. Requires Co(2+) as cofactor. The cofactor is Zn(2+).

The protein localises to the cytoplasm. The enzyme catalyses 7-phospho-2-dehydro-3-deoxy-D-arabino-heptonate = 3-dehydroquinate + phosphate. It participates in metabolic intermediate biosynthesis; chorismate biosynthesis; chorismate from D-erythrose 4-phosphate and phosphoenolpyruvate: step 2/7. Catalyzes the conversion of 3-deoxy-D-arabino-heptulosonate 7-phosphate (DAHP) to dehydroquinate (DHQ). This is 3-dehydroquinate synthase from Streptococcus mutans serotype c (strain ATCC 700610 / UA159).